We begin with the raw amino-acid sequence, 250 residues long: PF03932 family protein CutC (250 aa).

The protein belongs to the CutC family.

It is found in the cytoplasm. The polypeptide is PF03932 family protein CutC (Vibrio vulnificus (strain YJ016)).